An 878-amino-acid chain; its full sequence is Probable ATP-dependent RNA helicase ddx10 (878 aa).

Residues Met1–Asn15 show a composition bias toward basic and acidic residues. Disordered stretches follow at residues Met1–Val53 and Arg102–Glu130. Residues Asn16–Thr30 are compositionally biased toward low complexity. Positions Glu31–Val53 are enriched in basic and acidic residues. Residues Arg102–Ser112 are compositionally biased toward polar residues. Positions Thr113 to Thr123 are enriched in low complexity. The Q motif motif lies at Thr141–Arg169. Residues Phe161 to Lys163, Gln168, and Ala185 to Thr192 contribute to the ATP site. Positions Leu172 to Ile346 constitute a Helicase ATP-binding domain. The DEAD box signature appears at Asp294–Asp297. The region spanning Lys372–Val521 is the Helicase C-terminal domain. The segment covering Asp608–Asp618 has biased composition (basic and acidic residues). 2 disordered regions span residues Asp608 to Ala675 and Leu781 to Ile878. Acidic residues predominate over residues Ser635–Asp652. Over residues Asn665 to Asn674 the composition is skewed to basic and acidic residues. Positions Glu816–Glu850 are enriched in acidic residues. Residues Arg860–Ala869 are compositionally biased toward basic and acidic residues.

This sequence belongs to the DEAD box helicase family. DDX10/DBP4 subfamily.

The protein localises to the nucleus. It is found in the nucleolus. It catalyses the reaction ATP + H2O = ADP + phosphate + H(+). Functionally, probable ATP-dependent RNA helicase which may be involved in ribosome biogenesis. The polypeptide is Probable ATP-dependent RNA helicase ddx10 (ddx10) (Dictyostelium discoideum (Social amoeba)).